The sequence spans 100 residues: Proline-rich protein 15-like protein (100 aa).

A disordered region spans residues 26-100; that stretch reads PDTYTQSEGG…LFDDREGKGQ (75 aa). Residues 53 to 62 show a composition bias toward basic and acidic residues; that stretch reads RLEKIVDKNT.

This sequence belongs to the PRR15 family.

In Bos taurus (Bovine), this protein is Proline-rich protein 15-like protein (PRR15L).